The primary structure comprises 292 residues: Acetylglutamate kinase (292 aa).

Substrate is bound by residues 64-65, arginine 86, and asparagine 190; that span reads GG.

Belongs to the acetylglutamate kinase family. ArgB subfamily.

The protein resides in the cytoplasm. The catalysed reaction is N-acetyl-L-glutamate + ATP = N-acetyl-L-glutamyl 5-phosphate + ADP. Its pathway is amino-acid biosynthesis; L-arginine biosynthesis; N(2)-acetyl-L-ornithine from L-glutamate: step 2/4. In terms of biological role, catalyzes the ATP-dependent phosphorylation of N-acetyl-L-glutamate. The polypeptide is Acetylglutamate kinase (Citrifermentans bemidjiense (strain ATCC BAA-1014 / DSM 16622 / JCM 12645 / Bem) (Geobacter bemidjiensis)).